The chain runs to 396 residues: Smad nuclear-interacting protein 1 (396 aa).

Residues 1–10 are compositionally biased toward basic and acidic residues; sequence MKAVKSERER. The disordered stretch occupies residues 1–227; the sequence is MKAVKSERER…VPAKEKPSFE (227 aa). A Glycyl lysine isopeptide (Lys-Gly) (interchain with G-Cter in SUMO); alternate cross-link involves residue Lys30. Residue Lys30 forms a Glycyl lysine isopeptide (Lys-Gly) (interchain with G-Cter in SUMO1); alternate linkage. A Glycyl lysine isopeptide (Lys-Gly) (interchain with G-Cter in SUMO2); alternate cross-link involves residue Lys30. 4 positions are modified to phosphoserine: Ser35, Ser49, Ser52, and Ser54. Thr57 is subject to Phosphothreonine. Phosphoserine occurs at positions 58 and 99. Positions 77–105 are enriched in basic residues; that stretch reads PPKKKNKASGRRSKSPRSKRNRSPHHSTV. Residues 107 to 142 are compositionally biased toward basic and acidic residues; sequence VKQEREDHPRRGREDRQHREPSEQEHRRARNSDRDR. A Glycyl lysine isopeptide (Lys-Gly) (interchain with G-Cter in SUMO2) cross-link involves residue Lys108. Residue Ser153 is modified to Phosphoserine. Residues 165–196 adopt a coiled-coil conformation; the sequence is RDRDTQNLQAQEEEREFYNARRREHRQRNDVG. Position 202 is a phosphoserine (Ser202). The segment covering 213–225 has biased composition (basic and acidic residues); the sequence is NKEKEVPAKEKPS. Lys223 participates in a covalent cross-link: Glycyl lysine isopeptide (Lys-Gly) (interchain with G-Cter in SUMO2). The FHA domain maps to 281–344; that stretch reads YLLGRHRRIA…NGTFLNNKRI (64 aa). Residues 373-382 are compositionally biased toward basic and acidic residues; that stretch reads SSDTSEIDRK. The tract at residues 373 to 396 is disordered; the sequence is SSDTSEIDRKDDEDEEEEEEVSDS. The span at 383 to 396 shows a compositional bias: acidic residues; the sequence is DDEDEEEEEEVSDS. Position 394 is a phosphoserine (Ser394).

In terms of assembly, component of activated spliceosome complexes. Component of the minor spliceosome, which splices U12-type introns. Binds SMAD4 and CREBBP/EP300. Binds the SMAD1/OAZ1/PSMB4 complex. Interacts with DROSHA and SMARCA4. Component of the SNARP complex which consists at least of SNIP1, SNW1, THRAP3, BCLAF1 and PNN. In terms of processing, degraded by the proteasome upon binding to the SMAD1/OAZ1/PSMB4 complex. In terms of tissue distribution, ubiquitous, with highest expression in heart and skeletal muscle.

The protein resides in the nucleus. Required for pre-mRNA splicing as component of the spliceosome. As a component of the minor spliceosome, involved in the splicing of U12-type introns in pre-mRNAs. Down-regulates NF-kappa-B signaling by competing with RELA for CREBBP/EP300 binding. Involved in the microRNA (miRNA) biogenesis. May be involved in cyclin-D1/CCND1 mRNA stability through the SNARP complex which associates with both the 3'end of the CCND1 gene and its mRNA. This is Smad nuclear-interacting protein 1 (SNIP1) from Homo sapiens (Human).